The primary structure comprises 343 residues: Holliday junction branch migration complex subunit RuvB (343 aa).

A large ATPase domain (RuvB-L) region spans residues 1–178; that stretch reads MNFVQQNREG…FGMILELQFY (178 aa). ATP-binding positions include L17, R18, G59, K62, T63, T64, 125–127, R168, Y178, and R215; that span reads EDY. Residue T63 participates in Mg(2+) binding. A small ATPAse domain (RuvB-S) region spans residues 179-249; the sequence is TVKELMEIIK…LVEKTMDILE (71 aa). The interval 252–343 is head domain (RuvB-H); that stretch reads KLGLDEMDRK…DESLRKSDES (92 aa). Residues R307 and R312 each coordinate DNA.

Belongs to the RuvB family. As to quaternary structure, homohexamer. Forms an RuvA(8)-RuvB(12)-Holliday junction (HJ) complex. HJ DNA is sandwiched between 2 RuvA tetramers; dsDNA enters through RuvA and exits via RuvB. An RuvB hexamer assembles on each DNA strand where it exits the tetramer. Each RuvB hexamer is contacted by two RuvA subunits (via domain III) on 2 adjacent RuvB subunits; this complex drives branch migration. In the full resolvosome a probable DNA-RuvA(4)-RuvB(12)-RuvC(2) complex forms which resolves the HJ.

It localises to the cytoplasm. It carries out the reaction ATP + H2O = ADP + phosphate + H(+). In terms of biological role, the RuvA-RuvB-RuvC complex processes Holliday junction (HJ) DNA during genetic recombination and DNA repair, while the RuvA-RuvB complex plays an important role in the rescue of blocked DNA replication forks via replication fork reversal (RFR). RuvA specifically binds to HJ cruciform DNA, conferring on it an open structure. The RuvB hexamer acts as an ATP-dependent pump, pulling dsDNA into and through the RuvAB complex. RuvB forms 2 homohexamers on either side of HJ DNA bound by 1 or 2 RuvA tetramers; 4 subunits per hexamer contact DNA at a time. Coordinated motions by a converter formed by DNA-disengaged RuvB subunits stimulates ATP hydrolysis and nucleotide exchange. Immobilization of the converter enables RuvB to convert the ATP-contained energy into a lever motion, pulling 2 nucleotides of DNA out of the RuvA tetramer per ATP hydrolyzed, thus driving DNA branch migration. The RuvB motors rotate together with the DNA substrate, which together with the progressing nucleotide cycle form the mechanistic basis for DNA recombination by continuous HJ branch migration. Branch migration allows RuvC to scan DNA until it finds its consensus sequence, where it cleaves and resolves cruciform DNA. The polypeptide is Holliday junction branch migration complex subunit RuvB (Pseudothermotoga lettingae (strain ATCC BAA-301 / DSM 14385 / NBRC 107922 / TMO) (Thermotoga lettingae)).